The sequence spans 357 residues: Aspartate carbamoyltransferase catalytic subunit (357 aa).

Residues 1-15 (MSNSIDSQSLPTVSP) are compositionally biased toward polar residues. A disordered region spans residues 1–21 (MSNSIDSQSLPTVSPTDYARF). The carbamoyl phosphate site is built by R97 and T98. K125 is an L-aspartate binding site. Carbamoyl phosphate-binding residues include R147, H177, and Q180. L-aspartate contacts are provided by R211 and R266. 2 residues coordinate carbamoyl phosphate: G307 and P308.

It belongs to the aspartate/ornithine carbamoyltransferase superfamily. ATCase family. Heterododecamer (2C3:3R2) of six catalytic PyrB chains organized as two trimers (C3), and six regulatory PyrI chains organized as three dimers (R2).

The catalysed reaction is carbamoyl phosphate + L-aspartate = N-carbamoyl-L-aspartate + phosphate + H(+). It functions in the pathway pyrimidine metabolism; UMP biosynthesis via de novo pathway; (S)-dihydroorotate from bicarbonate: step 2/3. In terms of biological role, catalyzes the condensation of carbamoyl phosphate and aspartate to form carbamoyl aspartate and inorganic phosphate, the committed step in the de novo pyrimidine nucleotide biosynthesis pathway. The sequence is that of Aspartate carbamoyltransferase catalytic subunit from Psychrobacter cryohalolentis (strain ATCC BAA-1226 / DSM 17306 / VKM B-2378 / K5).